We begin with the raw amino-acid sequence, 380 residues long: Queuine tRNA-ribosyltransferase (380 aa).

The Proton acceptor role is filled by aspartate 96. Residues 96–100, aspartate 150, glutamine 193, and glycine 220 each bind substrate; that span reads DSGGF. The tract at residues 251–257 is RNA binding; that stretch reads GVGAPDS. The active-site Nucleophile is the aspartate 270. Residues 275 to 279 form an RNA binding; important for wobble base 34 recognition region; that stretch reads TRIAR. Zn(2+) is bound by residues cysteine 308, cysteine 310, cysteine 313, and histidine 339.

This sequence belongs to the queuine tRNA-ribosyltransferase family. Homodimer. Within each dimer, one monomer is responsible for RNA recognition and catalysis, while the other monomer binds to the replacement base PreQ1. Zn(2+) is required as a cofactor.

The enzyme catalyses 7-aminomethyl-7-carbaguanine + guanosine(34) in tRNA = 7-aminomethyl-7-carbaguanosine(34) in tRNA + guanine. Its pathway is tRNA modification; tRNA-queuosine biosynthesis. Its function is as follows. Catalyzes the base-exchange of a guanine (G) residue with the queuine precursor 7-aminomethyl-7-deazaguanine (PreQ1) at position 34 (anticodon wobble position) in tRNAs with GU(N) anticodons (tRNA-Asp, -Asn, -His and -Tyr). Catalysis occurs through a double-displacement mechanism. The nucleophile active site attacks the C1' of nucleotide 34 to detach the guanine base from the RNA, forming a covalent enzyme-RNA intermediate. The proton acceptor active site deprotonates the incoming PreQ1, allowing a nucleophilic attack on the C1' of the ribose to form the product. After dissociation, two additional enzymatic reactions on the tRNA convert PreQ1 to queuine (Q), resulting in the hypermodified nucleoside queuosine (7-(((4,5-cis-dihydroxy-2-cyclopenten-1-yl)amino)methyl)-7-deazaguanosine). This is Queuine tRNA-ribosyltransferase from Streptococcus equi subsp. equi (strain 4047).